Reading from the N-terminus, the 226-residue chain is ATP synthase F(0) complex subunit a (226 aa).

Transmembrane regions (helical) follow at residues phenylalanine 6–phenylalanine 26, tryptophan 68–leucine 88, glutamine 97–phenylalanine 117, isoleucine 138–valine 158, isoleucine 164–isoleucine 184, and alanine 189–isoleucine 209.

It belongs to the ATPase A chain family. In terms of assembly, component of the ATP synthase complex composed at least of ATP5F1A/subunit alpha, ATP5F1B/subunit beta, ATP5MC1/subunit c (homooctomer), MT-ATP6/subunit a, MT-ATP8/subunit 8, ATP5ME/subunit e, ATP5MF/subunit f, ATP5MG/subunit g, ATP5MK/subunit k, ATP5MJ/subunit j, ATP5F1C/subunit gamma, ATP5F1D/subunit delta, ATP5F1E/subunit epsilon, ATP5PF/subunit F6, ATP5PB/subunit b, ATP5PD/subunit d, ATP5PO/subunit OSCP. ATP synthase complex consists of a soluble F(1) head domain (subunits alpha(3) and beta(3)) - the catalytic core - and a membrane F(0) domain - the membrane proton channel (subunits c, a, 8, e, f, g, k and j). These two domains are linked by a central stalk (subunits gamma, delta, and epsilon) rotating inside the F1 region and a stationary peripheral stalk (subunits F6, b, d, and OSCP). Interacts with DNAJC30; interaction is direct.

It is found in the mitochondrion inner membrane. The catalysed reaction is H(+)(in) = H(+)(out). Its function is as follows. Subunit a, of the mitochondrial membrane ATP synthase complex (F(1)F(0) ATP synthase or Complex V) that produces ATP from ADP in the presence of a proton gradient across the membrane which is generated by electron transport complexes of the respiratory chain. ATP synthase complex consist of a soluble F(1) head domain - the catalytic core - and a membrane F(1) domain - the membrane proton channel. These two domains are linked by a central stalk rotating inside the F(1) region and a stationary peripheral stalk. During catalysis, ATP synthesis in the catalytic domain of F(1) is coupled via a rotary mechanism of the central stalk subunits to proton translocation. With the subunit c (ATP5MC1), forms the proton-conducting channel in the F(0) domain, that contains two crucial half-channels (inlet and outlet) that facilitate proton movement from the mitochondrial intermembrane space (IMS) into the matrix. Protons are taken up via the inlet half-channel and released through the outlet half-channel, following a Grotthuss mechanism. The chain is ATP synthase F(0) complex subunit a from Mus musculus (Mouse).